The chain runs to 128 residues: Large ribosomal subunit protein bL12 (128 aa).

Belongs to the bacterial ribosomal protein bL12 family. As to quaternary structure, homodimer. Part of the ribosomal stalk of the 50S ribosomal subunit. Forms a multimeric L10(L12)X complex, where L10 forms an elongated spine to which 2 to 4 L12 dimers bind in a sequential fashion. Binds GTP-bound translation factors.

In terms of biological role, forms part of the ribosomal stalk which helps the ribosome interact with GTP-bound translation factors. Is thus essential for accurate translation. The chain is Large ribosomal subunit protein bL12 from Kineococcus radiotolerans (strain ATCC BAA-149 / DSM 14245 / SRS30216).